Here is a 1255-residue protein sequence, read N- to C-terminus: MEAITFTARKHPFPNEVSVDFGLQLVGSLPVHSLTTMPMLPWVVAEVRRLSGQCSKKEPRTKQVRLWVSPSGLRCEPDLEKSQPWDPLICSSIFECKPQRVHKLIHNSHDPSYFACLIKEDAAHRQSLCYVFKADDQTKVPEIISSIRQAGKIARQEELRCPSEFDDTFAKKFEVLFCGRVTVAHKKAPPALIDECIEKFNHVSCGRRTDWEAPTGQPSAPGPRPMRKSFSQPGLRSLAFRKEFQDASLRSSTFSSFDNDIENHLIGGHNVVQPTDMEENRTMLFTIGQSEVYLISPDTKKIALEKNFKEISFCSQGIRHVDHFGFICRECSGGGSGGFHFVCYVFQCTNEALVDEIMMTLKQAFTVAAVQQTAKAPAQLCEGCPLQGLHKLCERIEGMNSSKTKLELQKHLTTLTNQEQATIFEEVQKLRPRNEQRENELIISFLRCLYEEKQKEHSHTGEPKQTLQVAAENIGSDLPPSASRFRLDSLKNRAKRSLTESLESILSRGNKARGLQDHSASVDLDSSTSSTLSNTSKELSMGDKEAFPVSETSFKLLGSSDDLSSDSEGHIAEESALLSPQQAFRRRANTLSHFPVECPAPPEPAQSSPGVSQRKLMRYHSVSTETPHERNVDHLPGGESQGCPGQPSAPPPPRLNPSASSPNFFKYLKHNSSGEQSGNAVPKSVSYRNALRKKLHSSSSVPNFLKFLAPVDENNTCDFKNTNRDFESKANHLGDTDGTPVKTRRHSWRQQIFLRVATPQKACDSPSRYEDYSELGELPPRSPLEPVCEDGPFGPVQEEKRKTSRELRELWKKAILQQILLLRMEKENQKLQASENDLLNKRLKLDYEEITPCLKEVTTVWEKMLSTPGRSKIKFDMEKVHSAVGQGVPRHHRGEIWKFLAEQFHLKHPFPSKQQPKDVPYKELLKKLTSQQHAILIDLGRTFPTHPYFSAQLGAGQLSLYNILKAYSLLDQEVGYCQGLSFVAGILLLHMSEEEAFKMLKFLMFDMGLRKQYRPDMIILQIQMYQLSRLLHDYHRDLYNHLEEHEIGPSLYAAPWFLTVFASQFPLGFVARVFDMIFLQGSEVIFKVALSLLGSHKPLILQHENLETIVDFIKNTLPNLGLVQMEKTISQVFEMDIAKQLQAYEVEYHVLQEELIESSPLSDNQRMEKLEKTNSSLRKQNLDLLEQLQVANARIQSLEATVEKLLTSESKLKQAALTLEVERSALLQMVEELRRQSARPSTPEPDCTQLEPTGD.

Serine 146 carries the post-translational modification Phosphoserine. The segment at 208-228 (RTDWEAPTGQPSAPGPRPMRK) is disordered. Position 229 is a phosphoserine; by PKB/AKT1 (serine 229). Serine 231 bears the Phosphoserine; by AMPK mark. A PID domain is found at 238 to 398 (LAFRKEFQDA…LHKLCERIEG (161 aa)). At serine 489 the chain carries Phosphoserine; by PKB/AKT1. Position 497 is a phosphoserine (serine 497). Threonine 499 bears the Phosphothreonine; by PKB/AKT1 mark. Phosphoserine occurs at positions 501, 519, 521, 559, 560, 564, 565, and 579. Disordered regions lie at residues 509–544 (GNKA…MGDK) and 559–581 (SSDD…LSPQ). The segment covering 519–539 (SASVDLDSSTSSTLSNTSKEL) has biased composition (low complexity). Threonine 590 bears the Phosphothreonine mark. Disordered stretches follow at residues 595–614 (PVEC…VSQR) and 621–681 (SVST…GNAV). Serine 608 carries the post-translational modification Phosphoserine. A Phosphoserine; by PKB/AKT1 modification is found at serine 621. Phosphoserine is present on residues serine 660 and serine 661. The segment covering 670-679 (HNSSGEQSGN) has biased composition (polar residues). Serine 697 bears the Phosphoserine; by PKB/AKT1 mark. Residues serine 698 and serine 699 each carry the phosphoserine modification. Serine 700 is subject to Phosphoserine; by AMPK. The tract at residues 764-786 (DSPSRYEDYSELGELPPRSPLEP) is disordered. Phosphoserine occurs at positions 782 and 1028. One can recognise a Rab-GAP TBC domain in the interval 887–1081 (GVPRHHRGEI…RVFDMIFLQG (195 aa)). At tyrosine 1039 the chain carries Phosphotyrosine. At threonine 1218 the chain carries Phosphothreonine. Residues 1233–1255 (LRRQSARPSTPEPDCTQLEPTGD) are disordered.

In terms of assembly, interacts with APPL2 (via BAR domain); interaction is dependent of TBC1D1 phosphorylation at Ser-229; interaction diminishes the phosphorylation of TBC1D1 at Thr-590, resulting in inhibition of SLC2A4/GLUT4 translocation and glucose uptake. Post-translationally, insulin-stimulated phosphorylation by AKT family kinases stimulates SLC2A4/GLUT4 translocation. In terms of tissue distribution, expressed in highest levels in hematopoietic cells, testis and kidney.

It is found in the nucleus. Functionally, may act as a GTPase-activating protein for Rab family protein(s). May play a role in the cell cycle and differentiation of various tissues. Involved in the trafficking and translocation of GLUT4-containing vesicles and insulin-stimulated glucose uptake into cells. The protein is TBC1 domain family member 1 (Tbc1d1) of Mus musculus (Mouse).